A 296-amino-acid chain; its full sequence is Homoserine kinase (296 aa).

84 to 94 (PLARGLGSSSS) is an ATP binding site.

It belongs to the GHMP kinase family. Homoserine kinase subfamily.

It localises to the cytoplasm. It carries out the reaction L-homoserine + ATP = O-phospho-L-homoserine + ADP + H(+). It functions in the pathway amino-acid biosynthesis; L-threonine biosynthesis; L-threonine from L-aspartate: step 4/5. Its function is as follows. Catalyzes the ATP-dependent phosphorylation of L-homoserine to L-homoserine phosphate. The protein is Homoserine kinase of Lactococcus lactis subsp. lactis (strain IL1403) (Streptococcus lactis).